Here is a 310-residue protein sequence, read N- to C-terminus: Ribosomal RNA large subunit methyltransferase F (310 aa).

The protein belongs to the methyltransferase superfamily. METTL16/RlmF family.

Its subcellular location is the cytoplasm. The enzyme catalyses adenosine(1618) in 23S rRNA + S-adenosyl-L-methionine = N(6)-methyladenosine(1618) in 23S rRNA + S-adenosyl-L-homocysteine + H(+). Specifically methylates the adenine in position 1618 of 23S rRNA. The sequence is that of Ribosomal RNA large subunit methyltransferase F from Pseudoalteromonas translucida (strain TAC 125).